A 412-amino-acid chain; its full sequence is Mitochondrial distribution and morphology protein 12 (412 aa).

Positions 1–410 (MSIDLEWAKL…FPNFHTLVMG (410 aa)) constitute an SMP-LTD domain. 4 disordered regions span residues 66 to 96 (EDDEDDSSTSPVKVTEGQLDAHGGEDDDGYE), 108 to 136 (YTEGGGHGGNGSHLPMHLRHPPLRSSPTD), 166 to 238 (QGSG…QQEN), and 314 to 354 (PAGD…KPLP). The span at 220–238 (NQPVFPSQQPQQQQPQQEN) shows a compositional bias: low complexity.

This sequence belongs to the MDM12 family. Component of the ER-mitochondria encounter structure (ERMES) or MDM complex, composed of MMM1, MDM10, MDM12 and MDM34. An MMM1 homodimer associates with one molecule of MDM12 on each side in a pairwise head-to-tail manner, and the SMP-LTD domains of MMM1 and MDM12 generate a continuous hydrophobic tunnel for phospholipid trafficking.

It localises to the mitochondrion outer membrane. The protein localises to the endoplasmic reticulum membrane. Its function is as follows. Component of the ERMES/MDM complex, which serves as a molecular tether to connect the endoplasmic reticulum (ER) and mitochondria. Components of this complex are involved in the control of mitochondrial shape and protein biogenesis, and function in nonvesicular lipid trafficking between the ER and mitochondria. MDM12 is required for the interaction of the ER-resident membrane protein MMM1 and the outer mitochondrial membrane-resident beta-barrel protein MDM10. The MDM12-MMM1 subcomplex functions in the major beta-barrel assembly pathway that is responsible for biogenesis of all mitochondrial outer membrane beta-barrel proteins, and acts in a late step after the SAM complex. The MDM10-MDM12-MMM1 subcomplex further acts in the TOM40-specific pathway after the action of the MDM12-MMM1 complex. Essential for establishing and maintaining the structure of mitochondria and maintenance of mtDNA nucleoids. The sequence is that of Mitochondrial distribution and morphology protein 12 from Coprinopsis cinerea (strain Okayama-7 / 130 / ATCC MYA-4618 / FGSC 9003) (Inky cap fungus).